A 659-amino-acid polypeptide reads, in one-letter code: UvrABC system protein B (659 aa).

Residues 25 to 412 (QSIENGNRGQ…SEIVAEQIIR (388 aa)) form the Helicase ATP-binding domain. 38–45 (GVTGSGKT) lines the ATP pocket. The short motif at 91–114 (YYDYYQPEAYVPQTDTFIEKDASI) is the Beta-hairpin element. The Helicase C-terminal domain occupies 429–582 (QIDDLYGEIQ…QMEYNEEHNI (154 aa)). The region spanning 622–657 (EKLIEQYEEEMKEAAKNLQFERAAELRDIIKDLKEN) is the UVR domain.

Belongs to the UvrB family. In terms of assembly, forms a heterotetramer with UvrA during the search for lesions. Interacts with UvrC in an incision complex.

It localises to the cytoplasm. Its function is as follows. The UvrABC repair system catalyzes the recognition and processing of DNA lesions. A damage recognition complex composed of 2 UvrA and 2 UvrB subunits scans DNA for abnormalities. Upon binding of the UvrA(2)B(2) complex to a putative damaged site, the DNA wraps around one UvrB monomer. DNA wrap is dependent on ATP binding by UvrB and probably causes local melting of the DNA helix, facilitating insertion of UvrB beta-hairpin between the DNA strands. Then UvrB probes one DNA strand for the presence of a lesion. If a lesion is found the UvrA subunits dissociate and the UvrB-DNA preincision complex is formed. This complex is subsequently bound by UvrC and the second UvrB is released. If no lesion is found, the DNA wraps around the other UvrB subunit that will check the other stand for damage. This is UvrABC system protein B from Clostridium perfringens (strain 13 / Type A).